Here is a 416-residue protein sequence, read N- to C-terminus: Thyroid hormone receptor alpha (416 aa).

The span at 1 to 13 shows a compositional bias: polar residues; the sequence is MEPMSNKQDSNSS. The interval 1-37 is disordered; sequence MEPMSNKQDSNSSEGDEKGWPDVPKRKRKNSQCSMKS. The tract at residues 1–58 is modulating; sequence MEPMSNKQDSNSSEGDEKGWPDVPKRKRKNSQCSMKSMSALSVSVPGYIPSYLEKDEP. The segment covering 15–24 has biased composition (basic and acidic residues); that stretch reads GDEKGWPDVP. 8 residues coordinate Zn(2+): C59, C62, C76, C79, C97, C103, C113, and C116. 2 NR C4-type zinc fingers span residues 59 to 79 and 97 to 121; these read CVVCGDKATGYHYRCITCEGC and CKYEGCCIIDKITRNQCQLCRFKKC. The nuclear receptor DNA-binding region spans 59–133; that stretch reads CVVCGDKATG…VGMAMDLVLD (75 aa). The NR LBD domain occupies 169–413; that stretch reads AEWELIRMAT…PPLFLEVFED (245 aa). R234 contributes to the 3,3',5-triiodo-L-thyronine binding site.

Belongs to the nuclear hormone receptor family. NR1 subfamily.

It localises to the nucleus. Functionally, nuclear hormone receptor that can act as a repressor or activator of transcription. High affinity receptor for thyroid hormones, including triiodothyronine and thyroxine. This chain is Thyroid hormone receptor alpha (thra), found in Hippoglossus hippoglossus (Atlantic halibut).